Reading from the N-terminus, the 1007-residue chain is Probable beta-galactosidase A (1007 aa).

The first 18 residues, 1-18 (MKLSSACAIALLAAQAAG), serve as a signal peptide directing secretion. Substrate is bound by residues Tyr96, Asn140, Ala141, and Glu142. Residue Asn156 is glycosylated (N-linked (GlcNAc...) asparagine). Asn199 serves as a coordination point for substrate. Glu200 acts as the Proton donor in catalysis. Cys205 and Cys206 are oxidised to a cystine. Tyr260 contacts substrate. The cysteines at positions 266 and 315 are disulfide-linked. Glu298 serves as the catalytic Nucleophile. A substrate-binding site is contributed by Tyr364. Residues Asn373, Asn402, Asn422, Asn478, Asn522, Asn622, Asn739, Asn760, Asn777, and Asn805 are each glycosylated (N-linked (GlcNAc...) asparagine). The segment at 862-881 (RQGFHQPEPPSQDWKSSSPL) is disordered. Asn914 carries an N-linked (GlcNAc...) asparagine glycan.

It belongs to the glycosyl hydrolase 35 family.

It is found in the secreted. The enzyme catalyses Hydrolysis of terminal non-reducing beta-D-galactose residues in beta-D-galactosides.. Functionally, cleaves beta-linked terminal galactosyl residues from gangliosides, glycoproteins, and glycosaminoglycans. This Aspergillus phoenicis (Aspergillus saitoi) protein is Probable beta-galactosidase A (lacA).